A 379-amino-acid chain; its full sequence is Protein COS2 (379 aa).

Topologically, residues 1–72 (MKENELKNEK…WKLSNNCIYP (72 aa)) are cytoplasmic. A helical membrane pass occupies residues 73 to 93 (LIVSLLVLFLGPIFVLVICGL). The Extracellular segment spans residues 94–254 (SRKRSLSKQL…FLCCIYVSRG (161 aa)). A helical transmembrane segment spans residues 255-275 (MCLLLRTLYLGWILFMLVQGF). Residues 276–379 (QNIRVLIMSM…QLSRSEVLLV (104 aa)) lie on the Cytoplasmic side of the membrane.

It belongs to the DUP/COS family.

The protein localises to the membrane. This is Protein COS2 (COS2) from Saccharomyces cerevisiae (strain ATCC 204508 / S288c) (Baker's yeast).